A 494-amino-acid chain; its full sequence is Rho GTPase-activating protein 19 (494 aa).

Position 2 is an N-acetylalanine (Ala2). 2 positions are modified to phosphoserine: Ser7 and Ser31. The Rho-GAP domain maps to 102 to 308 (MSLKRKEKGV…FMIKHSQKLF (207 aa)). Residues 399 to 451 (QSLTQTPGREPSTPRVQKRARSRSFSGLIKRKVLGSQMTSEKKNSSPAPESVA) form a disordered region. 3 positions are modified to phosphoserine: Ser422, Ser438, and Ser470. Phosphothreonine is present on Thr478.

GTPase activator for the Rho-type GTPases by converting them to an inactive GDP-bound state. The sequence is that of Rho GTPase-activating protein 19 (Arhgap19) from Mus musculus (Mouse).